The chain runs to 199 residues: CASP-like protein 4C1 (199 aa).

Over 1-35 the chain is Cytoplasmic; it reads MESGSVANDSGPLNSTPDVHLYGKTAAMKQRRSNT. A helical membrane pass occupies residues 36–56; the sequence is MLFVFRLLTFSFSLAAVLVMG. At 57 to 80 the chain is on the extracellular side; sequence TNKQKIRSAPQYLEVAWHDFDPFR. The helical transmembrane segment at 81-101 threads the bilayer; it reads YVFAVNAIICVYSFVETWLAV. Residues 102-124 lie on the Cytoplasmic side of the membrane; the sequence is YTLSRGTLLLPETFQVWFDYGHD. The chain crosses the membrane as a helical span at residues 125–145; it reads QGFACLLFSANSVGIAMAQLL. The Extracellular portion of the chain corresponds to 146–169; that stretch reads QSGSTLIQGQYYCSDAGAYCTQAR. A helical transmembrane segment spans residues 170–190; the sequence is VSIAMGFGAFLFLALSSFLTG. Residues 191–199 are Cytoplasmic-facing; sequence LRVARWYLP.

It belongs to the Casparian strip membrane proteins (CASP) family. As to quaternary structure, homodimer and heterodimers.

Its subcellular location is the cell membrane. The sequence is that of CASP-like protein 4C1 from Physcomitrium patens (Spreading-leaved earth moss).